We begin with the raw amino-acid sequence, 246 residues long: 1-(5-phosphoribosyl)-5-[(5-phosphoribosylamino)methylideneamino] imidazole-4-carboxamide isomerase (246 aa).

Aspartate 8 serves as the catalytic Proton acceptor. Aspartate 131 (proton donor) is an active-site residue.

This sequence belongs to the HisA/HisF family.

It is found in the cytoplasm. It catalyses the reaction 1-(5-phospho-beta-D-ribosyl)-5-[(5-phospho-beta-D-ribosylamino)methylideneamino]imidazole-4-carboxamide = 5-[(5-phospho-1-deoxy-D-ribulos-1-ylimino)methylamino]-1-(5-phospho-beta-D-ribosyl)imidazole-4-carboxamide. The protein operates within amino-acid biosynthesis; L-histidine biosynthesis; L-histidine from 5-phospho-alpha-D-ribose 1-diphosphate: step 4/9. This is 1-(5-phosphoribosyl)-5-[(5-phosphoribosylamino)methylideneamino] imidazole-4-carboxamide isomerase from Albidiferax ferrireducens (strain ATCC BAA-621 / DSM 15236 / T118) (Rhodoferax ferrireducens).